A 205-amino-acid polypeptide reads, in one-letter code: Golgi apparatus membrane protein TVP23 homolog B (205 aa).

Methionine 1 carries the post-translational modification N-acetylmethionine. The tract at residues 1-21 is disordered; sequence MLQQDSNDDTEDVSLFDAEEE. 4 consecutive transmembrane segments (helical) span residues 34-53, 54-72, 126-146, and 152-172; these read PVAS…VYLL, CGLL…ILLL, IFWL…FSAL, and KWLA…YGYI.

The protein belongs to the TVP23 family.

Its subcellular location is the membrane. This is Golgi apparatus membrane protein TVP23 homolog B (TVP23B) from Homo sapiens (Human).